The sequence spans 354 residues: 5,10-methenyltetrahydromethanopterin hydrogenase (354 aa).

This sequence belongs to the HMD family.

It carries out the reaction 5,10-methenyl-5,6,7,8-tetrahydromethanopterin + H2 = 5,10-methylenetetrahydromethanopterin + H(+). It participates in one-carbon metabolism; methanogenesis from CO(2); 5,10-methylene-5,6,7,8-tetrahydromethanopterin from 5,10-methenyl-5,6,7,8-tetrahydromethanopterin (hydrogen route): step 1/1. Functionally, catalyzes the reversible reduction of methenyl-H(4)MPT(+) to methylene-H(4)MPT. The sequence is that of 5,10-methenyltetrahydromethanopterin hydrogenase from Methanococcus maripaludis (strain C7 / ATCC BAA-1331).